A 980-amino-acid chain; its full sequence is Conserved oligomeric Golgi complex subunit 1 (980 aa).

At Ala2 the chain carries N-acetylalanine. Position 7 is a phosphoserine (Ser7).

This sequence belongs to the COG1 family. As to quaternary structure, component of the conserved oligomeric Golgi complex which is composed of eight different subunits and is required for normal Golgi morphology and localization.

The protein localises to the golgi apparatus membrane. In terms of biological role, required for normal Golgi function. The chain is Conserved oligomeric Golgi complex subunit 1 (COG1) from Homo sapiens (Human).